The chain runs to 209 residues: Molybdenum cofactor guanylyltransferase (209 aa).

GTP is bound by residues leucine 16 to glycine 18, lysine 28, asparagine 56, aspartate 69, and aspartate 103. Residue aspartate 103 participates in Mg(2+) binding.

Belongs to the MobA family. Monomer. The cofactor is Mg(2+).

Its subcellular location is the cytoplasm. It carries out the reaction Mo-molybdopterin + GTP + H(+) = Mo-molybdopterin guanine dinucleotide + diphosphate. Transfers a GMP moiety from GTP to Mo-molybdopterin (Mo-MPT) cofactor (Moco or molybdenum cofactor) to form Mo-molybdopterin guanine dinucleotide (Mo-MGD) cofactor. The sequence is that of Molybdenum cofactor guanylyltransferase from Rhizobium leguminosarum bv. trifolii (strain WSM2304).